The chain runs to 156 residues: Transcription elongation factor GreA (156 aa).

Residues 45 to 66 adopt a coiled-coil conformation; the sequence is NAEYHSAKEKQSFIEGRIKELE.

It belongs to the GreA/GreB family.

In terms of biological role, necessary for efficient RNA polymerase transcription elongation past template-encoded arresting sites. The arresting sites in DNA have the property of trapping a certain fraction of elongating RNA polymerases that pass through, resulting in locked ternary complexes. Cleavage of the nascent transcript by cleavage factors such as GreA or GreB allows the resumption of elongation from the new 3'terminus. GreA releases sequences of 2 to 3 nucleotides. The protein is Transcription elongation factor GreA of Jannaschia sp. (strain CCS1).